Reading from the N-terminus, the 494-residue chain is Solute carrier family 2, facilitated glucose transporter member 3 (494 aa).

Topologically, residues 1–10 (MGTTKVTAPL) are cytoplasmic. A helical transmembrane segment spans residues 11–32 (IFAISVATIGSFQFGYNTGVIN). Residues 33–64 (APEAIIKDFLNYTLEERSEPPPSSVLLTSLWS) are Extracellular-facing. A glycan (N-linked (GlcNAc...) asparagine) is linked at Asn-43. A helical transmembrane segment spans residues 65 to 85 (LSVAIFSVGGMIGSFSVGLFV). Residues 86–90 (NRFGR) are Cytoplasmic-facing. The helical transmembrane segment at 91-111 (GNSMLIVNLLAIAGGCLMGFC) threads the bilayer. The Extracellular portion of the chain corresponds to 112-118 (KIAESVE). Residues 119–142 (MLILGRLIIGLFCGLCTGFVPMYI) form a helical membrane-spanning segment. Residues 143 to 153 (GEISPTALRGA) are Cytoplasmic-facing. A helical membrane pass occupies residues 154–174 (FGTLNQLGIVIGILVAQIFGL). Gln-159 contacts D-glucose. Over 175–183 (KVILGTEDL) the chain is Extracellular. The chain crosses the membrane as a helical span at residues 184 to 204 (WPLLLGFTILPAIIQCAALPF). The Cytoplasmic portion of the chain corresponds to 205–269 (CPESPRFLLI…LFRAPNYRQP (65 aa)). Thr-232 bears the Phosphothreonine mark. The helical transmembrane segment at 270-290 (IIISIMLQLSQQLSGINAVFY) threads the bilayer. The tract at residues 277 to 279 (QLS) is important for selectivity against fructose. Residues 280 to 281 (QQ) and Asn-286 contribute to the D-glucose site. Residues 291 to 304 (YSTGIFKDAGVQEP) are Extracellular-facing. The chain crosses the membrane as a helical span at residues 305–325 (VYATIGAGVVNTIFTVVSVFL). Asn-315 serves as a coordination point for D-glucose. Topologically, residues 326–331 (VERAGR) are cytoplasmic. A helical membrane pass occupies residues 332 to 352 (RTLHLIGLGGMAFCSILMTIS). At 353–363 (LLLKDNYSWMS) the chain is on the extracellular side. The N-linked (GlcNAc...) asparagine glycan is linked to Asn-358. A helical transmembrane segment spans residues 364–389 (FICIGAILVFVAFFEIGPGPIPWFIV). Residues Glu-378 and Trp-386 each contribute to the D-glucose site. Over 390–399 (AELFGQGPRP) the chain is Cytoplasmic. Residues 400-420 (AAMAVAGCSNWTSNFLVGLLF) traverse the membrane as a helical segment. The Extracellular portion of the chain corresponds to 421–429 (PSAAFYLGA). The helical transmembrane segment at 430 to 450 (YVFIVFTVFLVIFWVFTFFKV) threads the bilayer. At 451 to 494 (PETRGRTFEEITRAFEGQTQTGTRGEKGPIMEMNSIQPTKDTNA) the chain is on the cytoplasmic side. Residues 469 to 494 (TQTGTRGEKGPIMEMNSIQPTKDTNA) form a disordered region. The segment covering 484 to 494 (NSIQPTKDTNA) has biased composition (polar residues). Ser-485 carries the post-translational modification Phosphoserine. Phosphothreonine is present on Thr-492.

The protein belongs to the major facilitator superfamily. Sugar transporter (TC 2.A.1.1) family. Glucose transporter subfamily. Interacts with SMIM43; the interaction may promote SLC2A1-mediated glucose transport to meet the energy needs of mesendoderm differentiation.

It localises to the cell membrane. The protein resides in the perikaryon. The protein localises to the cell projection. The catalysed reaction is D-glucose(out) = D-glucose(in). It carries out the reaction D-galactose(in) = D-galactose(out). With respect to regulation, deoxyglucose transport is inhibited by D-glucose, D-galactose and maltose. Galactose transport is inhibited by D-glucose and maltose. Functionally, facilitative glucose transporter. Can also mediate the uptake of various other monosaccharides across the cell membrane. Mediates the uptake of glucose, 2-deoxyglucose, galactose, mannose, xylose and fucose, and probably also dehydroascorbate. Does not mediate fructose transport. Required for mesendoderm differentiation. The protein is Solute carrier family 2, facilitated glucose transporter member 3 of Bos taurus (Bovine).